The following is a 382-amino-acid chain: Na(+)/H(+) antiporter NhaA (382 aa).

Transmembrane regions (helical) follow at residues 14-34 (AGGI…NSSL), 49-69 (MSVS…LIGL), 87-107 (IFPA…YVAF), 117-137 (GWAI…ALLG), 146-166 (VFLL…IAFF), 171-191 (LSVL…LLNA), 205-225 (FILW…GVVL), 252-272 (VAFA…LEGV), 285-305 (VALG…YLAV), 321-341 (IFAV…ISSL), and 356-376 (LGIL…LSIS).

It belongs to the NhaA Na(+)/H(+) (TC 2.A.33) antiporter family.

The protein resides in the cell inner membrane. The enzyme catalyses Na(+)(in) + 2 H(+)(out) = Na(+)(out) + 2 H(+)(in). In terms of biological role, na(+)/H(+) antiporter that extrudes sodium in exchange for external protons. This chain is Na(+)/H(+) antiporter NhaA, found in Aliivibrio fischeri (strain ATCC 700601 / ES114) (Vibrio fischeri).